Here is a 737-residue protein sequence, read N- to C-terminus: NAD-dependent protein deacetylase sirtuin-1 (737 aa).

Positions M1–A28 are enriched in low complexity. Disordered regions lie at residues M1 to P56 and E75 to A125. Residue A2 is modified to N-acetylalanine. The interval A2 to A131 is interaction with CLOCK. The tract at residues A2–R268 is interaction with H1-4. S14 and S25 each carry phosphoserine. The Nuclear localization signal signature appears at L32–D39. S46 bears the Phosphoserine; by MAPK8 mark. Composition is skewed to low complexity over residues S46 to P56 and E75 to G94. Positions D111–A123 are enriched in acidic residues. The tract at residues R135–P533 is interaction with CCAR2. Positions L138–L145 match the Nuclear export signal motif. Phosphoserine is present on residues S151, S154, S164, and S165. The disordered stretch occupies residues C152–R171. The short motif at P223 to K230 is the Nuclear localization signal element. The Deacetylase sirtuin-type domain occupies K228 to E488. K230 carries the N6-acetyllysine modification. The segment at I248–L251 is required for interaction with the sumoylated form of CCAR2. NAD(+) contacts are provided by residues G253–Y272 and Q337–D340. H355 acts as the Proton acceptor in catalysis. Zn(2+) is bound by residues C363 and C366. At K369 the chain carries N6-acetyllysine. Residues C387 and C390 each contribute to the Zn(2+) site. C387 and C390 each carry S-nitrosocysteine. Residue K422 is modified to N6-acetyllysine. The short motif at V425 to I431 is the Nuclear export signal element. NAD(+) is bound by residues G432 to S434, N457 to E459, and C474. An N6-acetyllysine modification is found at K505. The tract at residues V514–Q539 is disordered. Position 522 is a phosphothreonine; by DYRK1A, DYRK3 and MAPK8 (T522). S527 carries the post-translational modification Phosphoserine. Residues D529–Q539 are compositionally biased toward polar residues. A Phosphothreonine modification is found at T536. The residue at position 600 (K600) is an N6-acetyllysine. A phosphoserine; by CaMK2 mark is found at S649 and S651. The tract at residues D653 to D713 is disordered. Positions L656 to E676 are enriched in low complexity. Over residues E677–E697 the composition is skewed to acidic residues. S737 carries the phosphoserine modification.

It belongs to the sirtuin family. Class I subfamily. As to quaternary structure, interacts with XBP1 isoform 2. Found in a complex with PCAF and MYOD1 Component of the eNoSC complex, composed of SIRT1, SUV39H1 and RRP8. Interacts with HES1, HEY2 and PML. Interacts with RPS19BP1/AROS. Interacts with CCAR2 (via N-terminus); the interaction disrupts the interaction between SIRT1 and p53/TP53. Interacts with SETD7; the interaction induces the dissociation of SIRT1 from p53/TP53 and increases p53/TP53 activity. Interacts with MYCN, NR1I2, CREBZF, TSC2, TLE1, FOS, JUN, NR0B2, PPARG, NCOR, IRS1, IRS2 and NMNAT1. Interacts with HNF1A; the interaction occurs under nutrient restriction. Interacts with SUZ12; the interaction mediates the association with the PRC4 histone methylation complex which is specific as an association with PCR2 and PCR3 complex variants is not found. Interacts with FOXO1; the interaction deacetylates FOXO1, enhances its DNA-binding ability and increases its transcriptional activity. Interacts with BCL6; leads to a epigenetic repression of specific target genes. Interacts with CLOCK, BMAL1 and PER2. Interacts with PPARA; the interaction seems to be modulated by NAD(+) levels. Interacts with NR1H3 and this interaction is inhibited in the presence of CCAR2. Interacts with CHEK2 and p53/TP53. Exhibits a preferential interaction with sumoylated CCAR2 over its unmodified form. Interacts with PACS2. Interacts with SIRT7. Interacts with PUS7. Interacts with TULP3. Interacts with MORN3; the interaction enhances the ubiquitination of p53/TP53. Zn(2+) is required as a cofactor. In terms of processing, methylated on multiple lysine residues; methylation is enhanced after DNA damage and is dispensable for deacetylase activity toward p53/TP53. Post-translationally, phosphorylated. Phosphorylated by STK4/MST1, resulting in inhibition of SIRT1-mediated p53/TP53 deacetylation. Phosphorylation by MAPK8/JNK1 at Ser-46 and Thr-522 leads to increased nuclear localization and enzymatic activity. Phosphorylation at Thr-522 by DYRK1A and DYRK3 activates deacetylase activity and promotes cell survival. Phosphorylation by mammalian target of rapamycin complex 1 (mTORC1) at Ser-46 inhibits deacetylation activity. Phosphorylated by CaMK2, leading to increased p53/TP53 and NF-kappa-B p65/RELA deacetylation activity. Proteolytically cleaved by cathepsin B upon TNF-alpha treatment to yield catalytic inactive but stable SirtT1 75 kDa fragment (75SirT1). In terms of processing, S-nitrosylated by GAPDH, leading to inhibit the NAD-dependent protein deacetylase activity. Post-translationally, acetylated at various Lys residues. Deacetylated via an autocatalytic mechanism. Autodeacetylation at Lys-230 promotes its protein deacetylase activity. Ubiquitinated; leading to degradation. Deubiquitinated by USP22; leading to stabilization. As to expression, widely expressed. Weakly expressed in liver and skeletal muscle.

The protein localises to the nucleus. The protein resides in the PML body. Its subcellular location is the cytoplasm. It localises to the mitochondrion. It catalyses the reaction N(6)-acetyl-L-lysyl-[protein] + NAD(+) + H2O = 2''-O-acetyl-ADP-D-ribose + nicotinamide + L-lysyl-[protein]. It carries out the reaction N(6)-propanoyl-L-lysyl-[protein] + NAD(+) + H2O = 3''-O-propanoyl-ADP-D-ribose + nicotinamide + L-lysyl-[protein]. The catalysed reaction is N(6)-(2E)-butenoyl-L-lysyl-[protein] + NAD(+) + H2O = 2''-O-(2E)-but-2-enoyl-ADP-D-ribose + nicotinamide + L-lysyl-[protein]. The enzyme catalyses N(6)-[(S)-lactoyl]-L-lysyl-[protein] + NAD(+) + H2O = 2''-O-(S)-lactoyl-ADP-D-ribose + nicotinamide + L-lysyl-[protein]. Its activity is regulated as follows. Activated by resveratrol (3,5,4'-trihydroxy-trans-stilbene), butein (3,4,2',4'-tetrahydroxychalcone), piceatannol (3,5,3',4'-tetrahydroxy-trans-stilbene), Isoliquiritigenin (4,2',4'-trihydroxychalcone), fisetin (3,7,3',4'-tetrahydroxyflavone) and quercetin (3,5,7,3',4'-pentahydroxyflavone). MAPK8/JNK1 and RPS19BP1/AROS act as positive regulators of deacetylation activity. Inhibited by nicotinamide. Negatively regulated by CCAR2. Its function is as follows. NAD-dependent protein deacetylase that links transcriptional regulation directly to intracellular energetics and participates in the coordination of several separated cellular functions such as cell cycle, response to DNA damage, metabolism, apoptosis and autophagy. Can modulate chromatin function through deacetylation of histones and can promote alterations in the methylation of histones and DNA, leading to transcriptional repression. Deacetylates a broad range of transcription factors and coregulators, thereby regulating target gene expression positively and negatively. Serves as a sensor of the cytosolic ratio of NAD(+)/NADH which is altered by glucose deprivation and metabolic changes associated with caloric restriction. Is essential in skeletal muscle cell differentiation and in response to low nutrients mediates the inhibitory effect on skeletal myoblast differentiation which also involves 5'-AMP-activated protein kinase (AMPK) and nicotinamide phosphoribosyltransferase (NAMPT). Component of the eNoSC (energy-dependent nucleolar silencing) complex, a complex that mediates silencing of rDNA in response to intracellular energy status and acts by recruiting histone-modifying enzymes. The eNoSC complex is able to sense the energy status of cell: upon glucose starvation, elevation of NAD(+)/NADP(+) ratio activates SIRT1, leading to histone H3 deacetylation followed by dimethylation of H3 at 'Lys-9' (H3K9me2) by SUV39H1 and the formation of silent chromatin in the rDNA locus. Deacetylates 'Lys-266' of SUV39H1, leading to its activation. Inhibits skeletal muscle differentiation by deacetylating PCAF and MYOD1. Deacetylates H2A and 'Lys-26' of H1-4. Deacetylates 'Lys-16' of histone H4 (in vitro). Involved in NR0B2/SHP corepression function through chromatin remodeling: Recruited to LRH1 target gene promoters by NR0B2/SHP thereby stimulating histone H3 and H4 deacetylation leading to transcriptional repression. Proposed to contribute to genomic integrity via positive regulation of telomere length; however, reports on localization to pericentromeric heterochromatin are conflicting. Proposed to play a role in constitutive heterochromatin (CH) formation and/or maintenance through regulation of the available pool of nuclear SUV39H1. Upon oxidative/metabolic stress decreases SUV39H1 degradation by inhibiting SUV39H1 polyubiquitination by MDM2. This increase in SUV39H1 levels enhances SUV39H1 turnover in CH, which in turn seems to accelerate renewal of the heterochromatin which correlates with greater genomic integrity during stress response. Deacetylates 'Lys-382' of p53/TP53 and impairs its ability to induce transcription-dependent proapoptotic program and modulate cell senescence. Deacetylates TAF1B and thereby represses rDNA transcription by the RNA polymerase I. Deacetylates MYC, promotes the association of MYC with MAX and decreases MYC stability leading to compromised transformational capability. Deacetylates FOXO3 in response to oxidative stress thereby increasing its ability to induce cell cycle arrest and resistance to oxidative stress but inhibiting FOXO3-mediated induction of apoptosis transcriptional activity; also leading to FOXO3 ubiquitination and protesomal degradation. Appears to have a similar effect on MLLT7/FOXO4 in regulation of transcriptional activity and apoptosis. Deacetylates DNMT1; thereby impairs DNMT1 methyltransferase-independent transcription repressor activity, modulates DNMT1 cell cycle regulatory function and DNMT1-mediated gene silencing. Deacetylates RELA/NF-kappa-B p65 thereby inhibiting its transactivating potential and augments apoptosis in response to TNF-alpha. Deacetylates HIF1A, KAT5/TIP60, RB1 and HIC1. Deacetylates FOXO1, which increases its DNA binding ability and enhances its transcriptional activity leading to increased gluconeogenesis in liver. Inhibits E2F1 transcriptional activity and apoptotic function, possibly by deacetylation. Involved in HES1- and HEY2-mediated transcriptional repression. In cooperation with MYCN seems to be involved in transcriptional repression of DUSP6/MAPK3 leading to MYCN stabilization by phosphorylation at 'Ser-62'. Deacetylates MEF2D. Required for antagonist-mediated transcription suppression of AR-dependent genes which may be linked to local deacetylation of histone H3. Represses HNF1A-mediated transcription. Required for the repression of ESRRG by CREBZF. Deacetylates NR1H3 and NR1H2 and deacetylation of NR1H3 at 'Lys-434' positively regulates transcription of NR1H3:RXR target genes, promotes NR1H3 proteasomal degradation and results in cholesterol efflux; a promoter clearing mechanism after reach round of transcription is proposed. Involved in lipid metabolism: deacetylates LPIN1, thereby inhibiting diacylglycerol synthesis. Implicated in regulation of adipogenesis and fat mobilization in white adipocytes by repression of PPARG which probably involves association with NCOR1 and SMRT/NCOR2. Deacetylates p300/EP300 and PRMT1. Deacetylates ACSS2 leading to its activation, and HMGCS1 deacetylation. Involved in liver and muscle metabolism. Through deacetylation and activation of PPARGC1A is required to activate fatty acid oxidation in skeletal muscle under low-glucose conditions and is involved in glucose homeostasis. Involved in regulation of PPARA and fatty acid beta-oxidation in liver. Involved in positive regulation of insulin secretion in pancreatic beta cells in response to glucose; the function seems to imply transcriptional repression of UCP2. Proposed to deacetylate IRS2 thereby facilitating its insulin-induced tyrosine phosphorylation. Deacetylates SREBF1 isoform SREBP-1C thereby decreasing its stability and transactivation in lipogenic gene expression. Involved in DNA damage response by repressing genes which are involved in DNA repair, such as XPC and TP73, deacetylating XRCC6/Ku70, and facilitating recruitment of additional factors to sites of damaged DNA, such as SIRT1-deacetylated NBN can recruit ATM to initiate DNA repair and SIRT1-deacetylated XPA interacts with RPA2. Also involved in DNA repair of DNA double-strand breaks by homologous recombination and specifically single-strand annealing independently of XRCC6/Ku70 and NBN. Promotes DNA double-strand breaks by mediating deacetylation of SIRT6. Transcriptional suppression of XPC probably involves an E2F4:RBL2 suppressor complex and protein kinase B (AKT) signaling. Transcriptional suppression of TP73 probably involves E2F4 and PCAF. Deacetylates WRN thereby regulating its helicase and exonuclease activities and regulates WRN nuclear translocation in response to DNA damage. Deacetylates APEX1 at 'Lys-6' and 'Lys-7' and stimulates cellular AP endonuclease activity by promoting the association of APEX1 to XRCC1. Catalyzes deacetylation of ERCC4/XPF, thereby impairing interaction with ERCC1 and nucleotide excision repair (NER). Increases p53/TP53-mediated transcription-independent apoptosis by blocking nuclear translocation of cytoplasmic p53/TP53 and probably redirecting it to mitochondria. Deacetylates XRCC6/Ku70 at 'Lys-537' and 'Lys-540' causing it to sequester BAX away from mitochondria thereby inhibiting stress-induced apoptosis. Is involved in autophagy, presumably by deacetylating ATG5, ATG7 and MAP1LC3B/ATG8. Deacetylates AKT1 which leads to enhanced binding of AKT1 and PDK1 to PIP3 and promotes their activation. Proposed to play role in regulation of STK11/LBK1-dependent AMPK signaling pathways implicated in cellular senescence which seems to involve the regulation of the acetylation status of STK11/LBK1. Can deacetylate STK11/LBK1 and thereby increase its activity, cytoplasmic localization and association with STRAD; however, the relevance of such activity in normal cells is unclear. In endothelial cells is shown to inhibit STK11/LBK1 activity and to promote its degradation. Deacetylates SMAD7 at 'Lys-64' and 'Lys-70' thereby promoting its degradation. Deacetylates CIITA and augments its MHC class II transactivation and contributes to its stability. Deacetylates MECOM/EVI1. Deacetylates PML at 'Lys-487' and this deacetylation promotes PML control of PER2 nuclear localization. During the neurogenic transition, represses selective NOTCH1-target genes through histone deacetylation in a BCL6-dependent manner and leading to neuronal differentiation. Regulates the circadian expression of several core clock genes, including BMAL1, RORC, PER2 and CRY1 and plays a critical role in maintaining a controlled rhythmicity in histone acetylation, thereby contributing to circadian chromatin remodeling. Deacetylates BMAL1 and histones at the circadian gene promoters in order to facilitate repression by inhibitory components of the circadian oscillator. Deacetylates PER2, facilitating its ubiquitination and degradation by the proteasome. Protects cardiomyocytes against palmitate-induced apoptosis. Deacetylates XBP1 isoform 2; deacetylation decreases protein stability of XBP1 isoform 2 and inhibits its transcriptional activity. Deacetylates PCK1 and directs its activity toward phosphoenolpyruvate production promoting gluconeogenesis. Involved in the CCAR2-mediated regulation of PCK1 and NR1D1. Deacetylates CTNB1 at 'Lys-49'. In POMC (pro-opiomelanocortin) neurons, required for leptin-induced activation of PI3K signaling. Deacetylates SOX9; promoting SOX9 nuclear localization and transactivation activity. Involved in the regulation of centrosome duplication: Deacetylates CENATAC in G1 phase, allowing for SASS6 accumulation on the centrosome and subsequent procentriole assembly. Deacetylates NDC80/HEC1. In addition to protein deacetylase activity, also acts as a protein-lysine deacylase by mediating protein delactylation, depropionylation and decrotonylation. Mediates depropionylation of Osterix (SP7). Catalyzes decrotonylation of histones; it however does not represent a major histone decrotonylase. Mediates protein delactylation of TEAD1 and YAP1. Functionally, deacetylates 'Lys-382' of p53/TP53, however with lower activity than isoform 1. In combination, the two isoforms exert an additive effect. Isoform 2 regulates p53/TP53 expression and cellular stress response and is in turn repressed by p53/TP53 presenting a SIRT1 isoform-dependent auto-regulatory loop. In terms of biological role, catalytically inactive 75SirT1 may be involved in regulation of apoptosis. May be involved in protecting chondrocytes from apoptotic death by associating with cytochrome C and interfering with apoptosome assembly. The polypeptide is NAD-dependent protein deacetylase sirtuin-1 (Sirt1) (Mus musculus (Mouse)).